Consider the following 458-residue polypeptide: UDP-N-acetylmuramate--L-alanine ligase (458 aa).

Position 112–118 (112–118 (GTHGKTT)) interacts with ATP.

It belongs to the MurCDEF family.

The protein localises to the cytoplasm. It carries out the reaction UDP-N-acetyl-alpha-D-muramate + L-alanine + ATP = UDP-N-acetyl-alpha-D-muramoyl-L-alanine + ADP + phosphate + H(+). The protein operates within cell wall biogenesis; peptidoglycan biosynthesis. Functionally, cell wall formation. This is UDP-N-acetylmuramate--L-alanine ligase from Geotalea uraniireducens (strain Rf4) (Geobacter uraniireducens).